We begin with the raw amino-acid sequence, 177 residues long: MRRPFKADAPVKEGPRANKEIRVPRVQLIDAEQNLGSIPIDQALRMADEAGLDLVEIAPNSDPPVCKILDLGKLKYANQKKAAEARKKQKIVEIKEIKMRPNIDTHDYEVKMKAMNRFFEEGDKVKVTLKFRGREMAHQELGMKLLMQVKDDTQEIAKVEAEPKLEGRQMMMVLAPK.

This sequence belongs to the IF-3 family. As to quaternary structure, monomer.

It is found in the cytoplasm. In terms of biological role, IF-3 binds to the 30S ribosomal subunit and shifts the equilibrium between 70S ribosomes and their 50S and 30S subunits in favor of the free subunits, thus enhancing the availability of 30S subunits on which protein synthesis initiation begins. This Rhizobium meliloti (strain 1021) (Ensifer meliloti) protein is Translation initiation factor IF-3.